The primary structure comprises 76 residues: Omega-conotoxin-like Ai6.3 (76 aa).

An N-terminal signal peptide occupies residues 1–22 (MKLTCLMIVAVLFLTAWTFVTA). Positions 23-50 (VPDSSNALENLYLKAHHEMNNPEDSELN) are excised as a propeptide. Disulfide bonds link cysteine 53-cysteine 67, cysteine 60-cysteine 71, and cysteine 66-cysteine 75.

This sequence belongs to the conotoxin O1 superfamily. Expressed by the venom duct.

The protein resides in the secreted. Omega-conotoxins act at presynaptic membranes, they bind and block voltage-gated calcium channels (Cav). This chain is Omega-conotoxin-like Ai6.3, found in Conus ammiralis (Admiral cone).